A 150-amino-acid polypeptide reads, in one-letter code: 6,7-dimethyl-8-ribityllumazine synthase (150 aa).

Residues Phe11, 43-45 (VYD), and 67-69 (AVI) contribute to the 5-amino-6-(D-ribitylamino)uracil site. 72-73 (AT) contributes to the (2S)-2-hydroxy-3-oxobutyl phosphate binding site. Catalysis depends on His75, which acts as the Proton donor. Residue Leu100 participates in 5-amino-6-(D-ribitylamino)uracil binding. (2S)-2-hydroxy-3-oxobutyl phosphate is bound at residue Arg115.

The protein belongs to the DMRL synthase family.

The catalysed reaction is (2S)-2-hydroxy-3-oxobutyl phosphate + 5-amino-6-(D-ribitylamino)uracil = 6,7-dimethyl-8-(1-D-ribityl)lumazine + phosphate + 2 H2O + H(+). It functions in the pathway cofactor biosynthesis; riboflavin biosynthesis; riboflavin from 2-hydroxy-3-oxobutyl phosphate and 5-amino-6-(D-ribitylamino)uracil: step 1/2. Catalyzes the formation of 6,7-dimethyl-8-ribityllumazine by condensation of 5-amino-6-(D-ribitylamino)uracil with 3,4-dihydroxy-2-butanone 4-phosphate. This is the penultimate step in the biosynthesis of riboflavin. The protein is 6,7-dimethyl-8-ribityllumazine synthase of Pyrobaculum neutrophilum (strain DSM 2338 / JCM 9278 / NBRC 100436 / V24Sta) (Thermoproteus neutrophilus).